Reading from the N-terminus, the 302-residue chain is GTPase Era (302 aa).

The region spanning 4 to 171 (KAGFVALVGR…KEKIVSLLPE (168 aa)) is the Era-type G domain. A G1 region spans residues 12 to 19 (GRTNVGKS). 12 to 19 (GRTNVGKS) is a binding site for GTP. The tract at residues 38-42 (QTTRN) is G2. The segment at 59-62 (DTPG) is G3. Residues 59–63 (DTPGI) and 121–124 (NKID) contribute to the GTP site. Positions 121–124 (NKID) are G4. The tract at residues 150-152 (ISA) is G5. Positions 202–280 (LEEEVPHGVY…FLDLWVKTRK (79 aa)) constitute a KH type-2 domain.

It belongs to the TRAFAC class TrmE-Era-EngA-EngB-Septin-like GTPase superfamily. Era GTPase family. Monomer.

The protein localises to the cytoplasm. It localises to the cell membrane. Functionally, an essential GTPase that binds both GDP and GTP, with rapid nucleotide exchange. Plays a role in 16S rRNA processing and 30S ribosomal subunit biogenesis and possibly also in cell cycle regulation and energy metabolism. The protein is GTPase Era of Thermoanaerobacter pseudethanolicus (strain ATCC 33223 / 39E) (Clostridium thermohydrosulfuricum).